The primary structure comprises 349 residues: tRNA pseudouridine synthase D (349 aa).

Residue Phe-27 coordinates substrate. The active-site Nucleophile is the Asp-80. Asn-129 is a binding site for substrate. A TRUD domain is found at 155 to 303 (GVPNYFGAQR…VEAARRAMLL (149 aa)). Position 329 (Phe-329) interacts with substrate.

The protein belongs to the pseudouridine synthase TruD family.

It catalyses the reaction uridine(13) in tRNA = pseudouridine(13) in tRNA. Its function is as follows. Responsible for synthesis of pseudouridine from uracil-13 in transfer RNAs. The protein is tRNA pseudouridine synthase D of Escherichia coli O127:H6 (strain E2348/69 / EPEC).